Here is a 299-residue protein sequence, read N- to C-terminus: tRNA dimethylallyltransferase (299 aa).

Residue 13–20 participates in ATP binding; sequence GPTASGKT. 15–20 is a substrate binding site; it reads TASGKT. Positions 38–41 are interaction with substrate tRNA; that stretch reads DSRQ.

The protein belongs to the IPP transferase family. As to quaternary structure, monomer. Mg(2+) serves as cofactor.

The catalysed reaction is adenosine(37) in tRNA + dimethylallyl diphosphate = N(6)-dimethylallyladenosine(37) in tRNA + diphosphate. Functionally, catalyzes the transfer of a dimethylallyl group onto the adenine at position 37 in tRNAs that read codons beginning with uridine, leading to the formation of N6-(dimethylallyl)adenosine (i(6)A). The chain is tRNA dimethylallyltransferase from Prochlorococcus marinus (strain SARG / CCMP1375 / SS120).